The sequence spans 316 residues: MPLEFEKPILELERRIAELKETAKATGVDLEAEIRLLEERLARLRKETYENLTPWQRVQLARASGRPTTLDVLEKAFQDFIELHGDRAFADDPAIVGGLAYLEGEKVVVVGHQKGRDTKENLQRNFGMPHPEGYRKAMRLMDLADRFGYPFLTFVDTPGAYPGVSAEERGQAWVIAQSIQRMSRLRVPAVTVILGEGGSGGALAIAVANRVLILENAWYSVISPESCAAILWRDAKEAPKAAEALKLTAKDLLQLKVVDAIVPEPEGGAHKDPDRAIRNIKEALLKALEELKGLSPEALYEDRYRRFRSLGAFAEP.

Positions 36–290 constitute a CoA carboxyltransferase C-terminal domain; the sequence is LLEERLARLR…KEALLKALEE (255 aa).

The protein belongs to the AccA family. As to quaternary structure, acetyl-CoA carboxylase is a heterohexamer composed of biotin carboxyl carrier protein (AccB), biotin carboxylase (AccC) and two subunits each of ACCase subunit alpha (AccA) and ACCase subunit beta (AccD).

Its subcellular location is the cytoplasm. It catalyses the reaction N(6)-carboxybiotinyl-L-lysyl-[protein] + acetyl-CoA = N(6)-biotinyl-L-lysyl-[protein] + malonyl-CoA. It participates in lipid metabolism; malonyl-CoA biosynthesis; malonyl-CoA from acetyl-CoA: step 1/1. In terms of biological role, component of the acetyl coenzyme A carboxylase (ACC) complex. First, biotin carboxylase catalyzes the carboxylation of biotin on its carrier protein (BCCP) and then the CO(2) group is transferred by the carboxyltransferase to acetyl-CoA to form malonyl-CoA. The sequence is that of Acetyl-coenzyme A carboxylase carboxyl transferase subunit alpha from Thermus thermophilus (strain ATCC 27634 / DSM 579 / HB8).